A 376-amino-acid polypeptide reads, in one-letter code: Glutamate 5-kinase (376 aa).

Lysine 15 provides a ligand contact to ATP. Substrate is bound by residues serine 56, aspartate 143, and asparagine 155. Residue 175–176 (SD) coordinates ATP. The PUA domain occupies 281–358 (KGTLTIDAGA…PDVMMILGIT (78 aa)).

The protein belongs to the glutamate 5-kinase family.

Its subcellular location is the cytoplasm. The enzyme catalyses L-glutamate + ATP = L-glutamyl 5-phosphate + ADP. The protein operates within amino-acid biosynthesis; L-proline biosynthesis; L-glutamate 5-semialdehyde from L-glutamate: step 1/2. Functionally, catalyzes the transfer of a phosphate group to glutamate to form L-glutamate 5-phosphate. In Rhodopseudomonas palustris (strain TIE-1), this protein is Glutamate 5-kinase.